A 295-amino-acid polypeptide reads, in one-letter code: Hydroxyquinol 1,2-dioxygenase (295 aa).

Positions 165, 200, 224, and 226 each coordinate Fe cation.

It belongs to the intradiol ring-cleavage dioxygenase family. Fe(3+) serves as cofactor.

It carries out the reaction benzene-1,2,4-triol + O2 = maleylacetate + 2 H(+). Its pathway is aromatic compound metabolism. In terms of biological role, involved in the gamma-resorcylate (2,6-dihydroxybenzoate) catabolism. Catalyzes the conversion of hydroxyquinol to malelylacetate. This chain is Hydroxyquinol 1,2-dioxygenase, found in Rhizobium sp. (strain MTP-10005).